An 860-amino-acid chain; its full sequence is SH2 domain-containing protein 3C (860 aa).

At serine 22 the chain carries Phosphoserine. Disordered regions lie at residues 51-117 and 130-180; these read EATQ…PPGL and PLED…PEAG. A compositionally biased stretch (basic and acidic residues) spans 162–175; that stretch reads ERPPRDVHSERAAG. Residues 220 to 319 enclose the SH2 domain; sequence WYHGRIPREV…QSGAIIYCPV (100 aa). Residues tyrosine 278 and tyrosine 283 each carry the phosphotyrosine modification. The tract at residues 335–537 is disordered; that stretch reads GQGSSKPASP…LSENGAPEGD (203 aa). Position 359 is a phosphoserine (serine 359). Low complexity-rich tracts occupy residues 405–420, 427–443, and 479–490; these read SPMS…PAYS, AAPA…SPVA, and SPSPSLSSYSDP. Residue serine 440 is modified to Phosphoserine. The 269-residue stretch at 586-854 folds into the Ras-GEF domain; that stretch reads DARTLARHVT…TALSHKLEPA (269 aa). Tyrosine 793 is modified (phosphotyrosine).

As to quaternary structure, component of a complex comprised of SH2D3C, BCAR1/CAS, and CRK. Within the complex, interacts with CRK and (via C-terminus) with BCAR1/CAS (via C-terminus). Interacts with NEDD9/HEF1. Interacts with EPHB2. Interacts with NEDD9/HEF1. Interacts with BCAR1/CAS. Interacts with PTK2B. In terms of assembly, interacts (via C-terminus) with BCAR1/CAS (via C-terminus). Interacts with IGF1. In terms of processing, phosphorylated by MAPK/ERK upon T-cell receptor stimulation in T-cells. Ubiquitously expressed.

Its subcellular location is the cytoplasm. The protein resides in the cell membrane. It localises to the cell projection. The protein localises to the axon. It is found in the ruffle membrane. In terms of biological role, acts as an adapter protein that mediates cell signaling pathways involved in cellular functions such as cell adhesion and migration, tissue organization, and the regulation of the immune response. Plays a role in integrin-mediated cell adhesion through BCAR1-CRK-RAPGEF1 signaling and activation of the small GTPase RAP1. Promotes cell migration and invasion through the extracellular matrix. Required for marginal zone B-cell development and thymus-independent type 2 immune responses. Mediates migration and adhesion of B cells in the splenic marginal zone via promoting hyperphosphorylation of NEDD9/CASL. Plays a role in CXCL13-induced chemotaxis of B-cells. Plays a role in the migration of olfactory sensory neurons (OSNs) into the forebrain and the innervation of the olfactory bulb by the OSN axons during development. Required for the efficient tyrosine phosphorylation of BCAR1 in OSN axons. Functionally, important regulator of chemokine-induced, integrin-mediated T lymphocyte adhesion and migration, acting upstream of RAP1. Required for tissue-specific adhesion of T lymphocytes to peripheral tissues. Required for basal and CXCL2 stimulated serine-threonine phosphorylation of NEDD9. May be involved in the regulation of T-cell receptor-mediated IL2 production through the activation of the JNK pathway in T-cells. May be involved in the BCAR1/CAS-mediated JNK activation pathway. This is SH2 domain-containing protein 3C (SH2D3C) from Homo sapiens (Human).